The sequence spans 353 residues: Ribosome biogenesis protein BRX1 homolog (353 aa).

Basic residues predominate over residues 1–10 (MAATKRKRRG). Residues 1-46 (MAATKRKRRGGFAVQAKKPKRNEIDAEPPAKRHATAEEVEEEERDR) are disordered. A compositionally biased stretch (basic and acidic residues) spans 21–36 (RNEIDAEPPAKRHATA). Residues 60 to 249 (ERILIFSSRG…LIKIFQGSFG (190 aa)) enclose the Brix domain. Lys-160 is covalently cross-linked (Glycyl lysine isopeptide (Lys-Gly) (interchain with G-Cter in SUMO2)). Phosphoserine is present on Ser-261. Lys-276 carries the N6-acetyllysine modification. Glycyl lysine isopeptide (Lys-Gly) (interchain with G-Cter in SUMO2) cross-links involve residues Lys-314 and Lys-322.

The protein belongs to the BRX1 family.

The protein localises to the nucleus. The protein resides in the nucleolus. Required for biogenesis of the 60S ribosomal subunit. The sequence is that of Ribosome biogenesis protein BRX1 homolog (BRIX1) from Homo sapiens (Human).